We begin with the raw amino-acid sequence, 92 residues long: Small ribosomal subunit protein uS19 (92 aa).

Belongs to the universal ribosomal protein uS19 family.

Protein S19 forms a complex with S13 that binds strongly to the 16S ribosomal RNA. The sequence is that of Small ribosomal subunit protein uS19 from Prochlorococcus marinus (strain MIT 9215).